We begin with the raw amino-acid sequence, 145 residues long: MSVSMRLSRGGSKKRPYYKIVVSNSRAPRDGKYLEQVGTYNPLLAKDDENRVRLIEDRVRYWIGVGAQPTDRVARMLDKAGIKERAATNNPQKAEPGKKAKERAEERAEKAREAAEAAAAAAAAPAEEAAAEAPAEAAAEEQTEA.

A disordered region spans residues 82-145 (IKERAATNNP…EAAAEEQTEA (64 aa)). Positions 95–115 (EPGKKAKERAEERAEKAREAA) are enriched in basic and acidic residues. Residues 116-137 (EAAAAAAAAPAEEAAAEAPAEA) show a composition bias toward low complexity.

The protein belongs to the bacterial ribosomal protein bS16 family.

The sequence is that of Small ribosomal subunit protein bS16 from Novosphingobium aromaticivorans (strain ATCC 700278 / DSM 12444 / CCUG 56034 / CIP 105152 / NBRC 16084 / F199).